Consider the following 221-residue polypeptide: Guanylate kinase (221 aa).

A Guanylate kinase-like domain is found at 18–196 (GFLFILSSPS…SASLIKSIYL (179 aa)). 25–32 (SPSGAGKS) provides a ligand contact to ATP.

This sequence belongs to the guanylate kinase family.

The protein localises to the cytoplasm. The catalysed reaction is GMP + ATP = GDP + ADP. Functionally, essential for recycling GMP and indirectly, cGMP. This is Guanylate kinase from Bartonella quintana (strain Toulouse) (Rochalimaea quintana).